We begin with the raw amino-acid sequence, 141 residues long: Nucleoside diphosphate kinase (141 aa).

Residues lysine 11, phenylalanine 59, arginine 87, threonine 93, arginine 104, and asparagine 114 each contribute to the ATP site. Residue histidine 117 is the Pros-phosphohistidine intermediate of the active site.

This sequence belongs to the NDK family. Homotetramer. Mg(2+) serves as cofactor.

It localises to the cytoplasm. The enzyme catalyses a 2'-deoxyribonucleoside 5'-diphosphate + ATP = a 2'-deoxyribonucleoside 5'-triphosphate + ADP. The catalysed reaction is a ribonucleoside 5'-diphosphate + ATP = a ribonucleoside 5'-triphosphate + ADP. In terms of biological role, major role in the synthesis of nucleoside triphosphates other than ATP. The ATP gamma phosphate is transferred to the NDP beta phosphate via a ping-pong mechanism, using a phosphorylated active-site intermediate. The protein is Nucleoside diphosphate kinase of Proteus mirabilis (strain HI4320).